The chain runs to 400 residues: Subtilisin-like protease 2 (400 aa).

The N-terminal stretch at M1–A20 is a signal peptide. Residues A21–N119 constitute a propeptide that is removed on maturation. Positions S42–Q117 constitute an Inhibitor I9 domain. Residue N82 is glycosylated (N-linked (GlcNAc...) asparagine). The Peptidase S8 domain maps to T128–A400. Catalysis depends on charge relay system residues D160, H192, and S345.

Belongs to the peptidase S8 family.

It localises to the secreted. With respect to regulation, potently inhibited by the serine peptidase inhibitor chymostatin. Also inhibited by antpain and PMSF. In terms of biological role, major secreted subtilisin-like serine endopeptidase. Preferentially cleaves substrates containing hydrophobic residues at P4, positively charged residues at P3, small or flexible residues at P2, and large, bulky residues at P1. Mediates the degradation of collagen, the major structural protein in the mammalian host. Degrades the nonhelical regions of collagen that function in the cross-linking of the helical components. May function as virulence factor involved in epidermal wing necrosis observed in white nose syndrome (WNS) in bats. This is Subtilisin-like protease 2 from Pseudogymnoascus destructans (strain ATCC MYA-4855 / 20631-21) (Bat white-nose syndrome fungus).